Here is a 1752-residue protein sequence, read N- to C-terminus: DNA-directed RNA polymerase II subunit rpb1 (1752 aa).

The Zn(2+) site is built by Cys-69, Cys-72, Cys-79, His-82, Cys-109, Cys-112, Cys-150, and Cys-175. Mg(2+) contacts are provided by Asp-487, Asp-489, and Asp-491. The segment at 816–828 is bridging helix; that stretch reads PQEFFFHAMAGRE. A Glycyl lysine isopeptide (Lys-Gly) (interchain with G-Cter in ubiquitin) cross-link involves residue Lys-1252. Residues Ser-1489, Ser-1499, Ser-1506, and Ser-1529 each carry the phosphoserine modification. Tyr-1531 is subject to Phosphotyrosine. The tract at residues 1554-1752 is disordered; the sequence is TSPSYSPSSP…SPSYSPTSPS (199 aa). 5 repeat units span residues 1558–1564, 1578–1584, 1585–1591, 1592–1598, and 1599–1605. The tract at residues 1558–1752 is C-terminal domain (CTD); 26 X 7 AA approximate tandem repeats of Y-S-P-[TS]-S-P-S; the sequence is YSPSSPGYST…SPSYSPTSPS (195 aa). The 6; approximate repeat unit spans residues 1606-1612; it reads YSATSPS. 20 tandem repeats follow at residues 1613–1619, 1620–1626, 1627–1633, 1634–1640, 1641–1647, 1648–1654, 1655–1661, 1662–1668, 1669–1675, 1676–1682, 1683–1689, 1690–1696, 1697–1703, 1704–1710, 1711–1717, 1718–1724, 1725–1731, 1732–1738, 1739–1745, and 1746–1752.

This sequence belongs to the RNA polymerase beta' chain family. As to quaternary structure, component of the RNA polymerase II (Pol II) complex consisting of 12 subunits. Post-translationally, the tandem 7 residues repeats in the C-terminal domain (CTD) can be highly phosphorylated. The phosphorylation activates Pol II. Phosphorylation occurs mainly at residues 'Ser-2' and 'Ser-5' of the heptapeptide repeat. The phosphorylation state is believed to result from the balanced action of site-specific CTD kinases and phosphatase, and a 'CTD code' that specifies the position of Pol II within the transcription cycle has been proposed. In terms of processing, following transcription stress, the elongating form of RNA polymerase II (RNA pol IIo) is polyubiquitinated via 'Lys-63'-linkages on Lys-1252 at DNA damage sites without leading to degradation: ubiquitination promotes RNA pol IIo backtracking to allow access by the transcription-coupled nucleotide excision repair (TC-NER) machinery. Subsequent def1-dependent polyubiquitination by the elongin complex via 'Lys-48'-linkages may lead to proteasome-mediated degradation; presumably at stalled RNA pol II where TC-NER has failed, to halt global transcription and enable 'last resort' DNA repair pathways.

The protein localises to the nucleus. It catalyses the reaction RNA(n) + a ribonucleoside 5'-triphosphate = RNA(n+1) + diphosphate. DNA-dependent RNA polymerase catalyzes the transcription of DNA into RNA using the four ribonucleoside triphosphates as substrates. Largest and catalytic component of RNA polymerase II which synthesizes mRNA precursors and many functional non-coding RNAs. Forms the polymerase active center together with the second largest subunit. Pol II is the central component of the basal RNA polymerase II transcription machinery. It is composed of mobile elements that move relative to each other. RPB1 is part of the core element with the central large cleft, the clamp element that moves to open and close the cleft and the jaws that are thought to grab the incoming DNA template. At the start of transcription, a single-stranded DNA template strand of the promoter is positioned within the central active site cleft of Pol II. A bridging helix emanates from RPB1 and crosses the cleft near the catalytic site and is thought to promote translocation of Pol II by acting as a ratchet that moves the RNA-DNA hybrid through the active site by switching from straight to bent conformations at each step of nucleotide addition. During transcription elongation, Pol II moves on the template as the transcript elongates. Elongation is influenced by the phosphorylation status of the C-terminal domain (CTD) of Pol II largest subunit (RPB1), which serves as a platform for assembly of factors that regulate transcription initiation, elongation, termination and mRNA processing. This chain is DNA-directed RNA polymerase II subunit rpb1 (rpb1), found in Schizosaccharomyces pombe (strain 972 / ATCC 24843) (Fission yeast).